A 427-amino-acid chain; its full sequence is 5-hydroxybenzimidazole synthase BzaA (427 aa).

This sequence belongs to the ThiC family. 5-hydroxybenzimidazole synthase subfamily. [4Fe-4S] cluster is required as a cofactor.

It carries out the reaction 5-amino-1-(5-phospho-beta-D-ribosyl)imidazole + AH2 + S-adenosyl-L-methionine = 5-hydroxybenzimidazole + 5'-deoxyadenosine + formate + L-methionine + A + NH4(+) + phosphate + 2 H(+). It functions in the pathway cofactor biosynthesis; adenosylcobalamin biosynthesis. Its function is as follows. Together with BzaB, catalyzes the conversion of aminoimidazole ribotide (AIR) to 5-hydroxybenzimidazole (5-HBI) in a radical S-adenosyl-L-methionine (SAM)-dependent reaction. Is thus involved in the anaerobic biosynthesis of dimethylbenzimidazole (DMB), the lower axial ligand of vitamin B12 (cobalamin). Requires BzaB for catalytic activity, as BzaA alone displays no activity. This chain is 5-hydroxybenzimidazole synthase BzaA, found in Eubacterium limosum.